The sequence spans 274 residues: Shikimate dehydrogenase (NADP(+)) (274 aa).

Residues 14–16 (SKS) and threonine 61 contribute to the shikimate site. The Proton acceptor role is filled by lysine 65. Glutamate 77 lines the NADP(+) pocket. Asparagine 86 and aspartate 102 together coordinate shikimate. NADP(+) is bound by residues 126–130 (GAGGA), 149–154 (NRTLEK), and methionine 212. Tyrosine 214 provides a ligand contact to shikimate. NADP(+) is bound at residue glycine 237.

The protein belongs to the shikimate dehydrogenase family. In terms of assembly, homodimer.

It carries out the reaction shikimate + NADP(+) = 3-dehydroshikimate + NADPH + H(+). Its pathway is metabolic intermediate biosynthesis; chorismate biosynthesis; chorismate from D-erythrose 4-phosphate and phosphoenolpyruvate: step 4/7. Functionally, involved in the biosynthesis of the chorismate, which leads to the biosynthesis of aromatic amino acids. Catalyzes the reversible NADPH linked reduction of 3-dehydroshikimate (DHSA) to yield shikimate (SA). The chain is Shikimate dehydrogenase (NADP(+)) from Actinobacillus pleuropneumoniae serotype 5b (strain L20).